Reading from the N-terminus, the 212-residue chain is GTP-binding protein EngB (212 aa).

Residues 36–212 enclose the EngB-type G domain; it reads TAPEVAFAGR…LRAAVYDAII (177 aa). GTP is bound by residues 44–51, 71–75, 91–94, 158–161, and 192–194; these read GRSNVGKS, GRTQE, DMPG, TKSD, and TSS. Residues Ser51 and Thr73 each coordinate Mg(2+).

This sequence belongs to the TRAFAC class TrmE-Era-EngA-EngB-Septin-like GTPase superfamily. EngB GTPase family. The cofactor is Mg(2+).

Its function is as follows. Necessary for normal cell division and for the maintenance of normal septation. The protein is GTP-binding protein EngB of Zymomonas mobilis subsp. mobilis (strain ATCC 31821 / ZM4 / CP4).